We begin with the raw amino-acid sequence, 334 residues long: Ornithine carbamoyltransferase (334 aa).

Carbamoyl phosphate contacts are provided by residues 57-60 (STRT), Gln-84, Arg-108, and 135-138 (HPTQ). L-ornithine contacts are provided by residues Asn-169, Asp-233, and 237 to 238 (SM). Carbamoyl phosphate-binding positions include 275–276 (CL) and Arg-320.

The protein belongs to the aspartate/ornithine carbamoyltransferase superfamily. OTCase family.

The protein resides in the cytoplasm. It carries out the reaction carbamoyl phosphate + L-ornithine = L-citrulline + phosphate + H(+). The protein operates within amino-acid biosynthesis; L-arginine biosynthesis; L-arginine from L-ornithine and carbamoyl phosphate: step 1/3. In terms of biological role, reversibly catalyzes the transfer of the carbamoyl group from carbamoyl phosphate (CP) to the N(epsilon) atom of ornithine (ORN) to produce L-citrulline. The protein is Ornithine carbamoyltransferase of Vibrio cholerae serotype O1 (strain ATCC 39315 / El Tor Inaba N16961).